The sequence spans 117 residues: MSNIIDEIDKASMRDDIPEFRPGDSVKVHVKVVEGSRTRVQVFSGIVISRTGGGVQESFTVRKLSFGTGVERTFPLHSPIIDKIEVDRHGAVRRAKLYYLRGRRGKAAKIKERGSAR.

Belongs to the bacterial ribosomal protein bL19 family.

Its function is as follows. This protein is located at the 30S-50S ribosomal subunit interface and may play a role in the structure and function of the aminoacyl-tRNA binding site. This is Large ribosomal subunit protein bL19 from Cutibacterium acnes (strain DSM 16379 / KPA171202) (Propionibacterium acnes).